The sequence spans 456 residues: Bifunctional protein GlmU (456 aa).

The interval 1-229 (MLNSAMSVVI…LSEVEGVNNR (229 aa)) is pyrophosphorylase. Residues 11–14 (LAAG), lysine 25, glutamine 76, 81–82 (GT), 103–105 (YGD), glycine 140, glutamate 154, asparagine 169, and asparagine 227 each bind UDP-N-acetyl-alpha-D-glucosamine. Position 105 (aspartate 105) interacts with Mg(2+). Asparagine 227 is a binding site for Mg(2+). The segment at 230 to 250 (LQLSRLERVYQSEQAEKLLLA) is linker. The interval 251–456 (GVMLRDPARF…QGWQRPAKKK (206 aa)) is N-acetyltransferase. Residues arginine 333 and lysine 351 each coordinate UDP-N-acetyl-alpha-D-glucosamine. Histidine 363 acts as the Proton acceptor in catalysis. The UDP-N-acetyl-alpha-D-glucosamine site is built by tyrosine 366 and asparagine 377. Residues alanine 380, 386–387 (NY), serine 405, alanine 423, and arginine 440 each bind acetyl-CoA.

It in the N-terminal section; belongs to the N-acetylglucosamine-1-phosphate uridyltransferase family. The protein in the C-terminal section; belongs to the transferase hexapeptide repeat family. As to quaternary structure, homotrimer. Requires Mg(2+) as cofactor.

It localises to the cytoplasm. It carries out the reaction alpha-D-glucosamine 1-phosphate + acetyl-CoA = N-acetyl-alpha-D-glucosamine 1-phosphate + CoA + H(+). The catalysed reaction is N-acetyl-alpha-D-glucosamine 1-phosphate + UTP + H(+) = UDP-N-acetyl-alpha-D-glucosamine + diphosphate. It functions in the pathway nucleotide-sugar biosynthesis; UDP-N-acetyl-alpha-D-glucosamine biosynthesis; N-acetyl-alpha-D-glucosamine 1-phosphate from alpha-D-glucosamine 6-phosphate (route II): step 2/2. Its pathway is nucleotide-sugar biosynthesis; UDP-N-acetyl-alpha-D-glucosamine biosynthesis; UDP-N-acetyl-alpha-D-glucosamine from N-acetyl-alpha-D-glucosamine 1-phosphate: step 1/1. It participates in bacterial outer membrane biogenesis; LPS lipid A biosynthesis. Catalyzes the last two sequential reactions in the de novo biosynthetic pathway for UDP-N-acetylglucosamine (UDP-GlcNAc). The C-terminal domain catalyzes the transfer of acetyl group from acetyl coenzyme A to glucosamine-1-phosphate (GlcN-1-P) to produce N-acetylglucosamine-1-phosphate (GlcNAc-1-P), which is converted into UDP-GlcNAc by the transfer of uridine 5-monophosphate (from uridine 5-triphosphate), a reaction catalyzed by the N-terminal domain. The polypeptide is Bifunctional protein GlmU (Citrobacter koseri (strain ATCC BAA-895 / CDC 4225-83 / SGSC4696)).